The primary structure comprises 885 residues: Dipeptidyl peptidase 9 (885 aa).

Active-site charge relay system residues include Ser-752, Asp-830, and His-862. Ser-752 is a binding site for Val-boroPro.

This sequence belongs to the peptidase S9B family. DPPIV subfamily. As to quaternary structure, homodimer. Forms a ternary complex with NLRP1, composed of a DPP9 homodimer, one full-length NLRP1 protein, and one cleaved C-terminus of NLRP1 (NACHT, LRR and PYD domains-containing protein 1, C-terminus).

It localises to the nucleus. It carries out the reaction Release of an N-terminal dipeptide, Xaa-Yaa-|-Zaa-, from a polypeptide, preferentially when Yaa is Pro, provided Zaa is neither Pro nor hydroxyproline.. In terms of biological role, dipeptidyl peptidase that cleaves off N-terminal dipeptides from proteins having a Pro or Ala residue at position 2. Acts as a key inhibitor of the NLRP1 inflammasome. The polypeptide is Dipeptidyl peptidase 9 (Danio rerio (Zebrafish)).